The primary structure comprises 208 residues: Harpin secretion protein HrpW (208 aa).

The next 4 helical transmembrane spans lie at 2 to 22, 46 to 66, 149 to 169, and 176 to 196; these read LALF…CTAF, ALYG…AHDI, IGFL…NLLL, and VSPM…VSGW.

Belongs to the FliP/MopC/SpaP family.

It localises to the cell membrane. Its function is as follows. Required for the secretion of harpin. The sequence is that of Harpin secretion protein HrpW (hrpW) from Pseudomonas syringae pv. syringae.